We begin with the raw amino-acid sequence, 696 residues long: MSRKILVTSALPYANGAIHLGHLVEYIQTDIWVRFQKMSGNECWYVCADDTHGTPIMLRAEKEGITPEQLIARVHGEHSRDFAGFHVGFDNYYSTHSDETRDCANDIYLKLRAAGLIETRTIEQYYDPVKQLFLPDRFIKGECPKCGAKDQYGDNCESCGAAYAPTDLKEPYSAISGAKPELRTSEHYFFKLSDPRCEAFLRQYTSRDNGVLQNEAANKMQEWLGAPGENKLTDWDISRDAPYFGFEIPDAPGKYFYVWLDAPIGYMGSFKNLCARNGLDFNEYFKPDAKTELYHFIGKDILYFHALFWPAELAHAGFRTPTKIFAHGFLTVDGAKMSKSRGTFITAESFLKTGLNPEWLRYYYAAKLSATMEDIDLSLDDFVARVNSDLVGKYVNIASRSAGFITKRFNGQLAPATAELPAIKGIQEAASRIAELYEAREFGKAMREIMALTDAANQYVDSVKPWELAKQEGKEVELHAACTNALNLFRLLTVLLKPILPIVAEKVEKFLNIAPLHWADTQSLLAGGHAINAYEHLMTRVDPKLIEKLVEANKESLAPAPEAQSQQRHAEHQQNEVTAESPWEPFCNIDDFMKVDLRIVRIANAEHVEGADKLVRLTLDVGNNETRNVFAGIKAAYDPAQLIGRLTVMVANLAPRKMKFGLSEGMVLAASDGEGKTPGIFLLSPDSGAQPGMRVK.

The short motif at 12 to 22 (PYANGAIHLGH) is the 'HIGH' region element. Residues cysteine 143, cysteine 146, cysteine 156, and cysteine 159 each contribute to the Zn(2+) site. The 'KMSKS' region motif lies at 336 to 340 (KMSKS). ATP is bound at residue lysine 339. Residues 556 to 580 (SLAPAPEAQSQQRHAEHQQNEVTAE) form a disordered region. A tRNA-binding domain is found at 591 to 696 (DFMKVDLRIV…SGAQPGMRVK (106 aa)).

The protein belongs to the class-I aminoacyl-tRNA synthetase family. MetG type 1 subfamily. In terms of assembly, homodimer. It depends on Zn(2+) as a cofactor.

The protein localises to the cytoplasm. It catalyses the reaction tRNA(Met) + L-methionine + ATP = L-methionyl-tRNA(Met) + AMP + diphosphate. Its function is as follows. Is required not only for elongation of protein synthesis but also for the initiation of all mRNA translation through initiator tRNA(fMet) aminoacylation. The polypeptide is Methionine--tRNA ligase (Dechloromonas aromatica (strain RCB)).